Consider the following 66-residue polypeptide: Large ribosomal subunit protein bL35 (66 aa).

The disordered stretch occupies residues 19–45 (SGKVVAAQSTKRHGMTKRSKRSLRTRR). The span at 28-45 (TKRHGMTKRSKRSLRTRR) shows a compositional bias: basic residues.

It belongs to the bacterial ribosomal protein bL35 family.

The chain is Large ribosomal subunit protein bL35 from Anaplasma phagocytophilum (strain HZ).